The sequence spans 405 residues: S-adenosylmethionine synthase (405 aa).

139–144 (GKGSAD) lines the ATP pocket.

This sequence belongs to the AdoMet synthase 2 family. Mg(2+) serves as cofactor.

It carries out the reaction L-methionine + ATP + H2O = S-adenosyl-L-methionine + phosphate + diphosphate. It participates in amino-acid biosynthesis; S-adenosyl-L-methionine biosynthesis; S-adenosyl-L-methionine from L-methionine: step 1/1. Its function is as follows. Catalyzes the formation of S-adenosylmethionine from methionine and ATP. The protein is S-adenosylmethionine synthase of Sulfurisphaera tokodaii (strain DSM 16993 / JCM 10545 / NBRC 100140 / 7) (Sulfolobus tokodaii).